A 1509-amino-acid polypeptide reads, in one-letter code: DNA-directed RNA polymerase subunit beta' (1509 aa).

Zn(2+) is bound by residues Cys-75, Cys-77, Cys-90, and Cys-93. 3 residues coordinate Mg(2+): Asp-474, Asp-476, and Asp-478. Residues Cys-804, Cys-878, Cys-885, and Cys-888 each contribute to the Zn(2+) site.

Belongs to the RNA polymerase beta' chain family. The RNAP catalytic core consists of 2 alpha, 1 beta, 1 beta' and 1 omega subunit. When a sigma factor is associated with the core the holoenzyme is formed, which can initiate transcription. Mg(2+) serves as cofactor. Requires Zn(2+) as cofactor.

It catalyses the reaction RNA(n) + a ribonucleoside 5'-triphosphate = RNA(n+1) + diphosphate. Its function is as follows. DNA-dependent RNA polymerase catalyzes the transcription of DNA into RNA using the four ribonucleoside triphosphates as substrates. The sequence is that of DNA-directed RNA polymerase subunit beta' from Sulfurovum sp. (strain NBC37-1).